The following is a 206-amino-acid chain: Small ribosomal subunit protein uS4 (206 aa).

The S4 RNA-binding domain occupies 96–156; the sequence is TRLDNVVYRM…EKSRTQARIK (61 aa).

It belongs to the universal ribosomal protein uS4 family. In terms of assembly, part of the 30S ribosomal subunit. Contacts protein S5. The interaction surface between S4 and S5 is involved in control of translational fidelity.

In terms of biological role, one of the primary rRNA binding proteins, it binds directly to 16S rRNA where it nucleates assembly of the body of the 30S subunit. Functionally, with S5 and S12 plays an important role in translational accuracy. The chain is Small ribosomal subunit protein uS4 from Shewanella denitrificans (strain OS217 / ATCC BAA-1090 / DSM 15013).